The chain runs to 512 residues: Probable multidrug resistance protein EmrY (512 aa).

Residues 1–8 are Cytoplasmic-facing; it reads MAITKSTP. A helical transmembrane segment spans residues 9 to 29; it reads APLTGGTLWCVTIALSLATFM. Position 30 (Gln30) is a topological domain, periplasmic. Residues 31-51 form a helical membrane-spanning segment; it reads MLDSTISNVAIPTISGFLGAS. The Cytoplasmic segment spans residues 52-53; sequence TD. A helical membrane pass occupies residues 54 to 74; sequence EGTWVITSFGVANAIAIPVTG. At 75–84 the chain is on the periplasmic side; sequence RLAQRIGELR. The next 2 membrane-spanning stretches (helical) occupy residues 85–105 and 106–126; these read LFLL…LSTN and LDVL…LIPL. Topologically, residues 127-141 are periplasmic; that stretch reads SQSLLLRNYPPEKRT. The helical transmembrane segment at 142 to 162 threads the bilayer; the sequence is FALALWSMTVIIAPICGPILG. The Cytoplasmic portion of the chain corresponds to 163–172; that stretch reads GYICDNFSWG. Residues 173–193 form a helical membrane-spanning segment; it reads WIFLINVPMGIIVLTLCLTLL. The Periplasmic portion of the chain corresponds to 194–204; the sequence is KGRETETSPVK. The helical transmembrane segment at 205–225 threads the bilayer; that stretch reads MNLPGLTLLVLGVGGLQIMLD. Residues 226 to 234 are Cytoplasmic-facing; sequence KGRDLDWFN. Residues 235-255 form a helical membrane-spanning segment; that stretch reads SSTIIILTVVSVISLISLVIW. At 256-273 the chain is on the periplasmic side; sequence ESTSENPILDLSLFKSRN. Residues 274–294 form a helical membrane-spanning segment; that stretch reads FTIGIVSITCAYLFYSGAIVL. The Cytoplasmic portion of the chain corresponds to 295-307; that stretch reads MPQLLQETMGYNA. A helical transmembrane segment spans residues 308–328; the sequence is IWAGLAYAPIGIMPLLISPLI. Residues 329 to 338 lie on the Periplasmic side of the membrane; the sequence is GRYGNKIDMR. The chain crosses the membrane as a helical span at residues 339–359; that stretch reads LLVTFSFLMYAVCYYWRSVTF. Topologically, residues 360 to 364 are cytoplasmic; sequence MPTID. The helical transmembrane segment at 365 to 385 threads the bilayer; that stretch reads FTGIILPQFFQGFAVACFFLP. The Periplasmic portion of the chain corresponds to 386-486; it reads LTTISFSGLP…LSISANEIFR (101 aa). Residues 487–507 traverse the membrane as a helical segment; sequence MAAIAFILLTVLVWFAKPPFT. Topologically, residues 508–512 are cytoplasmic; that stretch reads AKGVG.

This sequence belongs to the major facilitator superfamily. EmrB family. Part of the tripartite efflux system EmrYK-TolC, which is composed of an inner membrane transporter, EmrY, a membrane fusion protein, EmrK, and an outer membrane component, TolC. The complex forms a large protein conduit and can translocate molecules across both the inner and outer membranes.

Its subcellular location is the cell inner membrane. Its function is as follows. Part of the tripartite efflux system EmrYK-TolC, which confers resistance to various drugs. This is Probable multidrug resistance protein EmrY (emrY) from Escherichia coli (strain K12).